The sequence spans 326 residues: uncharacterized protein (326 aa).

28 to 35 (GPINSGKT) provides a ligand contact to ATP.

This sequence belongs to the archaeal ATPase family.

This is an uncharacterized protein from Pyrococcus abyssi (strain GE5 / Orsay).